We begin with the raw amino-acid sequence, 141 residues long: Hemoglobin subunit alpha-D (141 aa).

The Globin domain occupies 1-141 (MLTADDKKIL…VAAVLAEKYR (141 aa)). Heme b contacts are provided by histidine 58 and histidine 87.

The protein belongs to the globin family. As to quaternary structure, heterotetramer of two alpha-D chains and two beta chains. In terms of tissue distribution, red blood cells.

Functionally, involved in oxygen transport from the lung to the various peripheral tissues. In Branta canadensis (Canada goose), this protein is Hemoglobin subunit alpha-D (HBAD).